Reading from the N-terminus, the 772-residue chain is Acetamidase regulatory protein (772 aa).

Positions 1 to 16 are enriched in polar residues; the sequence is MSSTAQKNSLSPTGNG. A disordered region spans residues 1 to 23; it reads MSSTAQKNSLSPTGNGVTKRKSG. The zn(2)-C6 fungal-type DNA-binding region spans 26–59; the sequence is ACVHCHRRKVRCDARIVGLPCSNCRSSGKTDCRI. 3 disordered regions span residues 78-99, 114-148, and 627-690; these read RCRP…TISE, AAAP…QECH, and ATSE…QTAV. Low complexity predominate over residues 114–123; that stretch reads AAAPPASVAP. Polar residues-rich tracts occupy residues 124 to 144 and 634 to 658; these read NVQS…SPQA and PFSS…QHSS. Residues 671 to 686 show a composition bias toward low complexity; sequence LLPSYDSPTPDSTSLP.

It localises to the nucleus. Positively regulates the expression of genes involved in the catabolism of certain amides, omega amino acids, and lactams. In Aspergillus fumigatus (strain ATCC MYA-4609 / CBS 101355 / FGSC A1100 / Af293) (Neosartorya fumigata), this protein is Acetamidase regulatory protein (amdR).